A 107-amino-acid polypeptide reads, in one-letter code: Ig kappa chain V-VI region NQ2-17.4.1 (107 aa).

A framework-1 region spans residues glutamine 1 to cysteine 23. Cysteine 23 and cysteine 87 are joined by a disulfide. The tract at residues serine 24–histidine 33 is complementarity-determining-1. The interval tryptophan 34–tyrosine 48 is framework-2. A complementarity-determining-2 region spans residues aspartate 49–serine 55. Residues glycine 56–cysteine 87 form a framework-3 region. Positions glutamine 88 to threonine 96 are complementarity-determining-3. The segment at phenylalanine 97–lysine 106 is framework-4.

Anti-2-phenyl oxazolone (PHOX) Antibody. The protein is Ig kappa chain V-VI region NQ2-17.4.1 of Mus musculus (Mouse).